A 597-amino-acid chain; its full sequence is NADH-quinone oxidoreductase subunits H/I (597 aa).

The interval 1–405 is NADH-quinone oxidoreductase subunit H; the sequence is MPDLSLFGHD…FPTPPVPADA (405 aa). The next 9 membrane-spanning stretches (helical) occupy residues 12-32, 82-102, 124-144, 170-190, 195-215, 260-280, 286-306, 318-338, and 351-371; these read FWLV…IPLV, PIYL…FAVI, VGVL…VLAG, MALC…SGIV, PTWF…SMVG, ALAT…NLIP, WWGL…FVWL, FMRL…MLVA, and ATGA…GLFL. Residues 406 to 597 are NADH-quinone oxidoreductase subunit I; that stretch reads HRVDNPKGGL…APAGAKGGAR (192 aa). 4Fe-4S ferredoxin-type domains follow at residues 455 to 485 and 501 to 530; these read LNRH…VEGA and RVYQ…MTND. Positions 465, 468, 471, 475, 510, 513, 516, and 520 each coordinate [4Fe-4S] cluster.

The protein in the N-terminal section; belongs to the complex I subunit 1 family. This sequence in the C-terminal section; belongs to the complex I 23 kDa subunit family. NDH-1 is composed of 13 different subunits. Subunits NuoA, H/I, J, K, L, M, N constitute the membrane sector of the complex. It depends on [4Fe-4S] cluster as a cofactor.

The protein localises to the cell membrane. The catalysed reaction is a quinone + NADH + 5 H(+)(in) = a quinol + NAD(+) + 4 H(+)(out). NDH-1 shuttles electrons from NADH, via FMN and iron-sulfur (Fe-S) centers, to quinones in the respiratory chain. The immediate electron acceptor for the enzyme in this species is believed to be ubiquinone. Couples the redox reaction to proton translocation (for every two electrons transferred, four hydrogen ions are translocated across the cytoplasmic membrane), and thus conserves the redox energy in a proton gradient. This subunit may bind ubiquinone. The polypeptide is NADH-quinone oxidoreductase subunits H/I (nuoH/I) (Nocardia farcinica (strain IFM 10152)).